Reading from the N-terminus, the 204-residue chain is MNYFSMENHNFRQIKSEIRILGIDDAPFTPRSEEDVLLVGTVFRGGQWLDGVLTTTVRVDGDDATERIIEMVNGSRHLNQLRVIMLDGLTFGGFNVVDIVELSERTGLPVIVVVRKHPDMERIKRALKHRFSDWKARWRSIERAGRIHRVESREPLYIQTAGIEPDDAAEIVRISTTRSSIPEPLRAAHIIASGVTLGESRGSA.

Belongs to the UPF0215 family.

The chain is UPF0215 protein MTH_1316 from Methanothermobacter thermautotrophicus (strain ATCC 29096 / DSM 1053 / JCM 10044 / NBRC 100330 / Delta H) (Methanobacterium thermoautotrophicum).